Here is a 431-residue protein sequence, read N- to C-terminus: MSKIVKVIGREIIDSRGNPTVEAEVHLEGGFVGLAAAPSGASTGSREALELRDGDKSRFLGKGVTKAVGAVNGPIAEAVTGKDAKDQANIDKIMIDLDGTENKSKFGANAILAVSLAAAKAAAAAKGMPLYEHIAELNGTPGKFSMPLPMMNIINGGEHADNNVDIQEFMIQPVGAKTLKEAVRIGSEVFHNLAKVLKSKGMSTAVGDEGGYAPNLGSNAEALAVIAEAVKAAGYELGKDITLAMDCAASEFYKDGKYVLAGEGNKAFTSEEFTHFLEDLTKQYPIVSIEDGLDESDWDGFAYQTKVLGDKIQLVGDDLFVTNTKILKEGIDKGIANSILIKFNQIGSLTETLAAIKMAKDAGYTAVISHRSGETEDATIADLAVGTAAGQIKTGSMSRSDRVAKYNQLIRIEEALGNRAPFNGLKEVKGQ.

A (2R)-2-phosphoglycerate-binding site is contributed by Q167. E209 (proton donor) is an active-site residue. D246, E290, and D317 together coordinate Mg(2+). Positions 342, 371, 372, and 393 each coordinate (2R)-2-phosphoglycerate. K342 functions as the Proton acceptor in the catalytic mechanism.

It belongs to the enolase family. Component of the RNA degradosome, a multiprotein complex involved in RNA processing and mRNA degradation. Mg(2+) is required as a cofactor.

Its subcellular location is the cytoplasm. The protein localises to the secreted. It is found in the cell surface. It carries out the reaction (2R)-2-phosphoglycerate = phosphoenolpyruvate + H2O. It functions in the pathway carbohydrate degradation; glycolysis; pyruvate from D-glyceraldehyde 3-phosphate: step 4/5. Catalyzes the reversible conversion of 2-phosphoglycerate (2-PG) into phosphoenolpyruvate (PEP). It is essential for the degradation of carbohydrates via glycolysis. The sequence is that of Enolase from Erwinia tasmaniensis (strain DSM 17950 / CFBP 7177 / CIP 109463 / NCPPB 4357 / Et1/99).